We begin with the raw amino-acid sequence, 279 residues long: Acetylglutamate kinase (279 aa).

Substrate contacts are provided by residues 64–65, R86, and N177; that span reads GG.

The protein belongs to the acetylglutamate kinase family. ArgB subfamily.

The protein resides in the cytoplasm. It catalyses the reaction N-acetyl-L-glutamate + ATP = N-acetyl-L-glutamyl 5-phosphate + ADP. The protein operates within amino-acid biosynthesis; L-arginine biosynthesis; N(2)-acetyl-L-ornithine from L-glutamate: step 2/4. In terms of biological role, catalyzes the ATP-dependent phosphorylation of N-acetyl-L-glutamate. This chain is Acetylglutamate kinase, found in Campylobacter jejuni (strain RM1221).